The following is a 96-amino-acid chain: Co-chaperonin GroES (96 aa).

Belongs to the GroES chaperonin family. As to quaternary structure, heptamer of 7 subunits arranged in a ring. Interacts with the chaperonin GroEL.

It is found in the cytoplasm. Together with the chaperonin GroEL, plays an essential role in assisting protein folding. The GroEL-GroES system forms a nano-cage that allows encapsulation of the non-native substrate proteins and provides a physical environment optimized to promote and accelerate protein folding. GroES binds to the apical surface of the GroEL ring, thereby capping the opening of the GroEL channel. This Dechloromonas aromatica (strain RCB) protein is Co-chaperonin GroES.